The chain runs to 349 residues: Phosphate acetyltransferase (349 aa).

The protein belongs to the phosphate acetyltransferase and butyryltransferase family.

It localises to the cytoplasm. The catalysed reaction is acetyl-CoA + phosphate = acetyl phosphate + CoA. The protein operates within metabolic intermediate biosynthesis; acetyl-CoA biosynthesis; acetyl-CoA from acetate: step 2/2. In Rickettsia felis (strain ATCC VR-1525 / URRWXCal2) (Rickettsia azadi), this protein is Phosphate acetyltransferase (pta).